Reading from the N-terminus, the 253-residue chain is Retinoic acid early-inducible protein 1-beta (253 aa).

Positions Met1–Gly28 are cleaved as a signal peptide. The cysteines at positions 37 and 56 are disulfide-linked. Asn38, Asn70, Asn83, Asn143, and Asn156 each carry an N-linked (GlcNAc...) asparagine glycan. An intrachain disulfide couples Cys90 to Cys190. The interval Leu198 to Thr230 is disordered. The segment covering Ser211 to Ser221 has biased composition (low complexity). A lipid anchor (GPI-anchor amidated serine) is attached at Ser229. A propeptide spans Thr230–Met253 (removed in mature form).

It belongs to the NKG2D ligand family. Glycosylated. In terms of tissue distribution, expressed predominantly in embryonic brain.

Its subcellular location is the cell membrane. Acts as a ligand for KLRK1. This Mus musculus (Mouse) protein is Retinoic acid early-inducible protein 1-beta (Raet1b).